Reading from the N-terminus, the 167-residue chain is Centrin-3 (167 aa).

EF-hand domains are found at residues 25–60, 61–96, 98–133, and 134–167; these read EQKQEIKDAFELFDTDKDQAIDYHELKVAMRALGFD, VKKADVLKILKDYDREATGKITFEDFNEVVTDWILE, DPHEEILKAFKLFDDDDSGKISLRNLRRVARELGEN, and MSDEELRAMIEEFDKDGDGEINQEEFIAIMTGDI. Asp-38, Asp-40, Asp-42, and Glu-49 together coordinate Ca(2+). Ser-135 carries the post-translational modification Phosphoserine. 5 residues coordinate Ca(2+): Asp-147, Asp-149, Asp-151, Glu-153, and Glu-158.

It belongs to the centrin family. As to quaternary structure, monomer. Component of the TREX-2 complex (transcription and export complex 2), composed of at least ENY2, GANP, PCID2, SEM1, and either centrin CETN2 or CETN3. Interacts with USP49.

It localises to the cytoplasm. It is found in the cytoskeleton. The protein localises to the microtubule organizing center. Its subcellular location is the centrosome. The protein resides in the nucleus. It localises to the nucleolus. It is found in the nucleus envelope. The protein localises to the nuclear pore complex. Its subcellular location is the centriole. Its function is as follows. Plays a fundamental role in microtubule-organizing center structure and function. Functionally, as a component of the TREX-2 complex, involved in the export of mRNAs to the cytoplasm through the nuclear pores. This chain is Centrin-3 (Cetn3), found in Mus musculus (Mouse).